The chain runs to 126 residues: Spermidine export protein MdtJ (126 aa).

The next 4 membrane-spanning stretches (helical) occupy residues 1 to 21, 32 to 52, 55 to 75, and 82 to 102; these read MMIYWIFLGLAIVAEIIGTLS, TGHIVMYFMITGSYIMLALAV, VALGVAYALWEGIGILIITVF, and ESLSPLKIAGLVTLVGGIMLV. Residues 104–126 are disordered; that stretch reads SGTRKPKKPNSPNRNSGEHHATA.

The protein belongs to the drug/metabolite transporter (DMT) superfamily. Small multidrug resistance (SMR) (TC 2.A.7.1) family. MdtJ subfamily. Forms a complex with MdtI.

The protein localises to the cell inner membrane. Functionally, catalyzes the excretion of spermidine. The chain is Spermidine export protein MdtJ from Yersinia enterocolitica serotype O:8 / biotype 1B (strain NCTC 13174 / 8081).